The chain runs to 355 residues: MKQVCVLGNGQLGRMLRQAGEPLGIAVWPVGLDAEPAAVPFQQSVITAEIERWPETALTRELARHPAFVNRDVFPIIADRLTQKQLFDKLHLPTAPWQLLAERSEWPAVFDRLGELAIVKRRTGGYDGRGQWRLRANETEQLPAECYGECIVEQGINFSGEVSLVGARGFDGSTVFYPLTHNLHQDGILRTSVAFPQANAQQQAQAEEMLSAIMQELGYVGVMAMECFVTPQGLLINELAPRVHNSGHWTQNGASISQFELHLRAITDLPLPQPVVNNPSVMINLIGSDVNYDWLKLPLVHLHWYDKEVRPGRKVGHLNLTDSDTSRLTATLEALIPLLPPEYASGVIWAQSKFG.

Residues arginine 80, lysine 120, 125-131 (GYDGRGQ), 153-156 (EQGI), glutamate 161, histidine 184, and 237-238 (NE) contribute to the ATP site. One can recognise an ATP-grasp domain in the interval 84–267 (KQLFDKLHLP…QFELHLRAIT (184 aa)).

The protein belongs to the PurK/PurT family. Homodimer.

It carries out the reaction 5-amino-1-(5-phospho-beta-D-ribosyl)imidazole + hydrogencarbonate + ATP = 5-carboxyamino-1-(5-phospho-D-ribosyl)imidazole + ADP + phosphate + 2 H(+). Its pathway is purine metabolism; IMP biosynthesis via de novo pathway; 5-amino-1-(5-phospho-D-ribosyl)imidazole-4-carboxylate from 5-amino-1-(5-phospho-D-ribosyl)imidazole (N5-CAIR route): step 1/2. Catalyzes the ATP-dependent conversion of 5-aminoimidazole ribonucleotide (AIR) and HCO(3)(-) to N5-carboxyaminoimidazole ribonucleotide (N5-CAIR). The protein is N5-carboxyaminoimidazole ribonucleotide synthase of Escherichia coli (strain K12).